Here is a 350-residue protein sequence, read N- to C-terminus: N(4)-bis(aminopropyl)spermidine synthase (350 aa).

This sequence belongs to the branched-chain polyamine synthase family.

It is found in the cytoplasm. The enzyme catalyses 2 S-adenosyl 3-(methylsulfanyl)propylamine + spermidine = N(4)-bis(aminopropyl)spermidine + 2 S-methyl-5'-thioadenosine + 2 H(+). Its pathway is amine and polyamine biosynthesis. Functionally, involved in the biosynthesis of branched-chain polyamines, which support the growth of thermophiles under high-temperature conditions. Catalyzes the sequential condensation of spermidine with the aminopropyl groups of decarboxylated S-adenosylmethionines to produce N(4)-bis(aminopropyl)spermidine via N(4)-aminopropylspermidine. The chain is N(4)-bis(aminopropyl)spermidine synthase from Methanocaldococcus jannaschii (strain ATCC 43067 / DSM 2661 / JAL-1 / JCM 10045 / NBRC 100440) (Methanococcus jannaschii).